The sequence spans 536 residues: Arylsulfatase K (536 aa).

The N-terminal stretch at 1–22 is a signal peptide; it reads MLLLWVSVVAALALAVLAPGAG. Residues Asp-40 and Cys-80 each coordinate Ca(2+). The active-site Nucleophile is the Cys-80. Cys-80 carries the 3-oxoalanine (Cys) modification. The N-linked (GlcNAc...) asparagine glycan is linked to Asn-108. Lys-128 provides a ligand contact to substrate. N-linked (GlcNAc...) asparagine glycosylation is found at Asn-166 and Asn-193. A substrate-binding site is contributed by His-251. Residue Asn-262 is glycosylated (N-linked (GlcNAc...) asparagine). Positions 313 and 314 each coordinate Ca(2+). Residues Asn-375, Asn-413, and Asn-498 are each glycosylated (N-linked (GlcNAc...) asparagine).

This sequence belongs to the sulfatase family. Ca(2+) serves as cofactor. The conversion to 3-oxoalanine (also known as C-formylglycine, FGly), of a serine or cysteine residue in prokaryotes and of a cysteine residue in eukaryotes, is critical for catalytic activity. In terms of processing, the 75-kDa precursor undergoes proteolytic processing to yield a 23 kDa form. Post-translationally, N-glycosylated with both high mannose and complex type sugars. In terms of tissue distribution, expressed at high levels in the placenta and pancreas. Expressed at intermediate levels in the lung, brain, heart, liver and kidney and at low levels in the muscle.

Its subcellular location is the secreted. The protein resides in the lysosome. It carries out the reaction an aryl sulfate + H2O = a phenol + sulfate + H(+). The enzyme catalyses Hydrolysis of the 2-sulfate groups of the 2-O-sulfo-D-glucuronate residues of chondroitin sulfate, heparin and heparitin sulfate.. In terms of biological role, catalyzes the hydrolysis of pseudosubstrates such as p-nitrocatechol sulfate and p-nitrophenyl sulfate. Catalyzes the hydrolysis of the 2-sulfate groups of the 2-O-sulfo-D-glucuronate residues of chondroitin sulfate, heparin and heparitin sulfate. Acts selectively on 2-sulfoglucuronate and lacks activity against 2-sulfoiduronate. This is Arylsulfatase K (ARSK) from Homo sapiens (Human).